Here is a 147-residue protein sequence, read N- to C-terminus: Lysozyme C (147 aa).

Residues 1–18 form the signal peptide; that stretch reads MRSLLILVLCFLPLAALG. The region spanning 19-147 is the C-type lysozyme domain; the sequence is KVFGRCELAA…VQAWIRGCRL (129 aa). 4 disulfide bridges follow: Cys-24-Cys-145, Cys-48-Cys-133, Cys-82-Cys-98, and Cys-94-Cys-112. Residues Glu-53 and Asp-70 contribute to the active site. Asp-119 serves as a coordination point for substrate.

It belongs to the glycosyl hydrolase 22 family. As to quaternary structure, monomer. In the egg white and polymorphonuclear leukocytes.

The protein localises to the secreted. It carries out the reaction Hydrolysis of (1-&gt;4)-beta-linkages between N-acetylmuramic acid and N-acetyl-D-glucosamine residues in a peptidoglycan and between N-acetyl-D-glucosamine residues in chitodextrins.. Functionally, lysozymes have primarily a bacteriolytic function; those in tissues and body fluids are associated with the monocyte-macrophage system and enhance the activity of immunoagents. Has bacteriolytic activity against M.luteus. This is Lysozyme C (LYZ) from Gallus gallus (Chicken).